The following is a 444-amino-acid chain: ATP-dependent protease ATPase subunit HslU (444 aa).

ATP-binding positions include I18, 60–65 (GVGKTE), D257, E322, and R394.

It belongs to the ClpX chaperone family. HslU subfamily. As to quaternary structure, a double ring-shaped homohexamer of HslV is capped on each side by a ring-shaped HslU homohexamer. The assembly of the HslU/HslV complex is dependent on binding of ATP.

The protein localises to the cytoplasm. In terms of biological role, ATPase subunit of a proteasome-like degradation complex; this subunit has chaperone activity. The binding of ATP and its subsequent hydrolysis by HslU are essential for unfolding of protein substrates subsequently hydrolyzed by HslV. HslU recognizes the N-terminal part of its protein substrates and unfolds these before they are guided to HslV for hydrolysis. The sequence is that of ATP-dependent protease ATPase subunit HslU from Psychromonas ingrahamii (strain DSM 17664 / CCUG 51855 / 37).